A 611-amino-acid polypeptide reads, in one-letter code: Aspartate--tRNA ligase, mitochondrial (611 aa).

Residues 1 to 30 constitute a mitochondrion transit peptide; sequence MVLSRLPACLLPLVGTKVSIQGWLVATSRQ. E192 is an L-aspartate binding site. The segment at 216–219 is aspartate; sequence QQYK. Position 238 (R238) interacts with L-aspartate. Residues 238–240 and E502 contribute to the ATP site; that span reads RDE. Residue R509 coordinates L-aspartate. 554–557 serves as a coordination point for ATP; that stretch reads GFDR.

The protein belongs to the class-II aminoacyl-tRNA synthetase family. Type 1 subfamily.

Its subcellular location is the mitochondrion. It catalyses the reaction tRNA(Asp) + L-aspartate + ATP = L-aspartyl-tRNA(Asp) + AMP + diphosphate. In Schizosaccharomyces pombe (strain 972 / ATCC 24843) (Fission yeast), this protein is Aspartate--tRNA ligase, mitochondrial (msd1).